A 344-amino-acid polypeptide reads, in one-letter code: N-acetyl-gamma-glutamyl-phosphate reductase (344 aa).

The active site involves Cys150.

It belongs to the NAGSA dehydrogenase family. Type 1 subfamily.

It is found in the cytoplasm. It carries out the reaction N-acetyl-L-glutamate 5-semialdehyde + phosphate + NADP(+) = N-acetyl-L-glutamyl 5-phosphate + NADPH + H(+). It functions in the pathway amino-acid biosynthesis; L-arginine biosynthesis; N(2)-acetyl-L-ornithine from L-glutamate: step 3/4. In terms of biological role, catalyzes the NADPH-dependent reduction of N-acetyl-5-glutamyl phosphate to yield N-acetyl-L-glutamate 5-semialdehyde. The chain is N-acetyl-gamma-glutamyl-phosphate reductase from Pseudomonas aeruginosa (strain ATCC 15692 / DSM 22644 / CIP 104116 / JCM 14847 / LMG 12228 / 1C / PRS 101 / PAO1).